The following is an 87-amino-acid chain: Small ribosomal subunit protein uS17 (87 aa).

This sequence belongs to the universal ribosomal protein uS17 family. Part of the 30S ribosomal subunit.

In terms of biological role, one of the primary rRNA binding proteins, it binds specifically to the 5'-end of 16S ribosomal RNA. The chain is Small ribosomal subunit protein uS17 from Cytophaga hutchinsonii (strain ATCC 33406 / DSM 1761 / CIP 103989 / NBRC 15051 / NCIMB 9469 / D465).